Here is an 87-residue protein sequence, read N- to C-terminus: Acyl-CoA-binding protein (87 aa).

Position 2 is an N-acetylserine (serine 2). One can recognise an ACB domain in the interval 2-87 (SQADFDKAAE…VEELKKKYGI (86 aa)). Lysine 8 carries the post-translational modification N6-acetyllysine; alternate. Lysine 8 carries the post-translational modification N6-succinyllysine; alternate. Residue lysine 14 participates in an acyl-CoA binding. An N6-succinyllysine modification is found at lysine 17. Tyrosine 29 carries the post-translational modification Phosphotyrosine. Residues 29 to 33 (YSHFK), lysine 51, lysine 55, and tyrosine 74 contribute to the an acyl-CoA site. At lysine 51 the chain carries N6-acetyllysine. Lysine 55 carries the N6-acetyllysine; alternate modification. At lysine 55 the chain carries N6-succinyllysine; alternate. An N6-(2-hydroxyisobutyryl)lysine; alternate modification is found at lysine 55. An N6-malonyllysine; alternate modification is found at lysine 55. Lysine 77 carries the post-translational modification N6-acetyllysine; alternate. Position 77 is an N6-succinyllysine; alternate (lysine 77).

Belongs to the ACBP family. Monomer.

It is found in the endoplasmic reticulum. The protein localises to the golgi apparatus. Binds medium- and long-chain acyl-CoA esters with very high affinity and may function as an intracellular carrier of acyl-CoA esters. It is also able to displace diazepam from the benzodiazepine (BZD) recognition site located on the GABA type A receptor. It is therefore possible that this protein also acts as a neuropeptide to modulate the action of the GABA receptor. The polypeptide is Acyl-CoA-binding protein (Dbi) (Rattus norvegicus (Rat)).